The primary structure comprises 153 residues: Superoxide dismutase [Cu-Zn] (153 aa).

Cu cation is bound by residues histidine 45, histidine 47, and histidine 62. The cysteines at positions 56 and 145 are disulfide-linked. Positions 62, 70, 79, and 82 each coordinate Zn(2+). Histidine 119 contacts Cu cation.

The protein belongs to the Cu-Zn superoxide dismutase family. In terms of assembly, homodimer. Cu cation is required as a cofactor. The cofactor is Zn(2+).

The protein resides in the cytoplasm. The enzyme catalyses 2 superoxide + 2 H(+) = H2O2 + O2. Destroys radicals which are normally produced within the cells and which are toxic to biological systems. The sequence is that of Superoxide dismutase [Cu-Zn] from Drosophila erecta (Fruit fly).